A 315-amino-acid polypeptide reads, in one-letter code: Universal stress protein E (315 aa).

Belongs to the universal stress protein A family.

The protein resides in the cytoplasm. Required for resistance to DNA-damaging agents. This is Universal stress protein E (uspE) from Salmonella typhi.